The following is a 90-amino-acid chain: Antitoxin epsilon (90 aa).

This sequence belongs to the epsilon antitoxin family. In the presence of the zeta toxin, forms an inactive PezA(2)PezT(2) heterotetramer. The heterotetramer is still able to bind the zeta toxin substrate UNAG.

Antitoxin component of a type II toxin-antitoxin (TA) system. Neutralizes the toxic effect of cognate zeta toxin. Part of a postsegregational killing (PSK) system involved in the killing of plasmid-free cells. Continuous synthesis of the epsilon antitoxin is required to counteract the zeta toxin. The chain is Antitoxin epsilon from Streptococcus pyogenes.